Reading from the N-terminus, the 75-residue chain is Protein RegB (75 aa).

Required for optimal exotoxin A production. This Pseudomonas aeruginosa (strain ATCC 15692 / DSM 22644 / CIP 104116 / JCM 14847 / LMG 12228 / 1C / PRS 101 / PAO1) protein is Protein RegB (regB).